A 440-amino-acid polypeptide reads, in one-letter code: MDEEYDVIVLGTGLTECVLSGLLSVDGKKVLHIDRNDYYGADSASLNLTQLYALFRPGEQRPESLGRDRDWCVDLVPKFLMANGDLTNILIYTDVTRYIEFKQIAGSYVYRDGRIAKVPGNEMEALKSPLMSLFEKRRAKKFLEWVNNYREDDPSTYKDINIDRDSMESVFKKFGLQSGTQDFIGHAMALYLDDAYLKKPARETRERILLYASSIAKFGKSPYIYPLYGLGELPQGFARLSAIYGGTYMLNQPVDEIVYGDDGVAIGVRSGDQVAKAKQIIGDPSYFREKVRSVGRLVRAICILNHPIPNTDNLDSVQIIIPQNQVKRKHDIYIAGISSVHNVCPKGYYLAIISTIVETANPLSEIAPGLKLLGPVVESFSRVQEIYEPVTDGTKDQCYISKSVDATSHFETLTCDVRDIYKRMTGTDLVLKQRPKMEDQ.

It belongs to the Rab GDI family.

The chain is Probable secretory pathway GDP dissociation inhibitor 1 (gdi1) from Schizosaccharomyces pombe (strain 972 / ATCC 24843) (Fission yeast).